We begin with the raw amino-acid sequence, 91 residues long: Probable Fe(2+)-trafficking protein (91 aa).

The protein belongs to the Fe(2+)-trafficking protein family. In terms of assembly, monomer.

In terms of biological role, could be a mediator in iron transactions between iron acquisition and iron-requiring processes, such as synthesis and/or repair of Fe-S clusters in biosynthetic enzymes. The sequence is that of Probable Fe(2+)-trafficking protein from Citrobacter koseri (strain ATCC BAA-895 / CDC 4225-83 / SGSC4696).